We begin with the raw amino-acid sequence, 200 residues long: Imidazoleglycerol-phosphate dehydratase (200 aa).

The protein belongs to the imidazoleglycerol-phosphate dehydratase family.

It localises to the cytoplasm. The enzyme catalyses D-erythro-1-(imidazol-4-yl)glycerol 3-phosphate = 3-(imidazol-4-yl)-2-oxopropyl phosphate + H2O. It participates in amino-acid biosynthesis; L-histidine biosynthesis; L-histidine from 5-phospho-alpha-D-ribose 1-diphosphate: step 6/9. This chain is Imidazoleglycerol-phosphate dehydratase, found in Prosthecochloris aestuarii (strain DSM 271 / SK 413).